The following is a 76-amino-acid chain: Putative snRNP Sm-like protein (76 aa).

The Sm domain occupies 4 to 76 (RPLDVIHRSL…VLAISPVDIE (73 aa)).

This sequence belongs to the snRNP Sm proteins family.

The protein is Putative snRNP Sm-like protein of Thermococcus gammatolerans (strain DSM 15229 / JCM 11827 / EJ3).